The following is a 198-amino-acid chain: Cyclin-dependent kinase inhibitor 1B (198 aa).

Residues 1–11 show a composition bias toward polar residues; that stretch reads MSNVRVSNGSP. Residues 1 to 34 are disordered; the sequence is MSNVRVSNGSPSLERMDARQAEHPKPSACRNLFG. The residue at position 10 (serine 10) is a Phosphoserine; by UHMK1. Positions 14–25 are enriched in basic and acidic residues; the sequence is ERMDARQAEHPK. Residues 51–91 form an interaction with CDK2 region; it reads DMEEASQRKWNFDFQNHKPLEGKYEWQEVEKGSLPEFYYRP. Residue tyrosine 74 is modified to Phosphotyrosine; by SRC. Positions 85–198 are disordered; sequence PEFYYRPPRP…KKPGLRRRQT (114 aa). A Phosphotyrosine; by ABL, LYN, SRC and JAK2 modification is found at tyrosine 88. Phosphotyrosine is present on tyrosine 89. Basic and acidic residues predominate over residues 126–137; sequence EDTHLVDPKTDP. The Nuclear localization signal signature appears at 153–169; that stretch reads KRPATDDSSTQNKRANR. Threonine 157 is subject to Phosphothreonine; by CaMK1, PKB/AKT1 and PIM1. A Phosphothreonine modification is found at threonine 170. Residues 175–186 show a composition bias toward polar residues; it reads SDGSPNAGSVEQ. At threonine 187 the chain carries Phosphothreonine; by PKB/AKT1, CDK1 and CDK2. At threonine 198 the chain carries Phosphothreonine; by CaMK1, PKB/AKT1, RPS6KA1, RPS6KA3 and PIM1.

This sequence belongs to the CDI family. In terms of assembly, forms a ternary complex composed of CCNE1, CDK2 and CDKN1B. Interacts directly with CCNE1; the interaction is inhibited by CDK2-dependent phosphorylation on Thr-187. Interacts with COPS5, subunit of the COP9 signalosome complex; the interaction leads to CDKN1B degradation. Interacts with NUP50; the interaction leads to nuclear import and degradation of phosphorylated CDKN1B. Interacts with CCND1 and SNX6. Interacts (Thr-198-phosphorylated form) with 14-3-3 proteins, binds strongly YWHAQ, weakly YWHAE and YWHAH, but not YWHAB nor YWHAZ; the interaction with YWHAQ results in translocation to the cytoplasm. Interacts with AKT1 and LYN; the interactions lead to cytoplasmic mislocation, phosphorylation of CDKN1B and inhibition of cell cycle arrest. Forms a ternary complex with CCNA2 and CDK2; CDKN1B inhibits the kinase activity of CDK2 through conformational rearrangements. Interacts (unphosphorylated form) with CDK2. Forms a complex with CDK2 and SPDYA, but does not directly interact with SPDYA. Forms a ternary complex composed of cyclin D, CDK4 and CDKN1B. Interacts (phosphorylated on Tyr-88 and Tyr-89) with CDK4; the interaction is required for cyclin D and CDK4 complex assembly, induces nuclear translocation and activates the CDK4 kinase activity. Interacts with GRB2. Interacts with PIM1. Identified in a complex with SKP1, SKP2 and CKS1B. Interacts with UHMK1; the interaction leads to cytoplasmic mislocation, phosphorylation of CDKN1B and inhibition of cell cycle arrest. Also interacts with CDK1. Dephosphorylated on Thr-187 by PPM1H, leading to CDKN1B stability. Interacts with HSPA8; the interaction may be associated with susceptibility to ubiquitination. Phosphorylated; phosphorylation occurs on serine, threonine and tyrosine residues. Phosphorylation on Ser-10 is the major site of phosphorylation in resting cells, takes place at the G(0)-G(1) phase and leads to protein stability. Phosphorylation on other sites is greatly enhanced by mitogens, growth factors, cMYC and in certain cancer cell lines. The phosphorylated form found in the cytoplasm is inactivate. Phosphorylation on Thr-198 is required for interaction with 14-3-3 proteins. Phosphorylation on Thr-187, by CDK1 and CDK2 leads to protein ubiquitination and proteasomal degradation. Tyrosine phosphorylation promotes this process. Phosphorylation by PKB/AKT1 can be suppressed by LY294002, an inhibitor of the catalytic subunit of PI3K. Phosphorylation on Tyr-88 and Tyr-89 has no effect on binding CDK2, but is required for binding CDK4. Dephosphorylated on tyrosine residues by G-CSF. Post-translationally, ubiquitinated; in the cytoplasm by the KPC complex (composed of RNF123/KPC1 and UBAC1/KPC2) and, in the nucleus, by SCF(SKP2). The latter requires prior phosphorylation on Thr-187. Ubiquitinated; by a TRIM21-containing SCF(SKP2)-like complex; leads to its degradation. In terms of processing, subject to degradation in the lysosome. Interaction with SNX6 promotes lysosomal degradation. Expressed in kidney (at protein level). Expressed in all tissues tested. Highest levels in skeletal muscle, lowest in liver and kidney.

It localises to the nucleus. It is found in the cytoplasm. Its subcellular location is the endosome. Functionally, important regulator of cell cycle progression. Inhibits the kinase activity of CDK2 bound to cyclin A, but has little inhibitory activity on CDK2 bound to SPDYA. Involved in G1 arrest. Potent inhibitor of cyclin E- and cyclin A-CDK2 complexes. Forms a complex with cyclin type D-CDK4 complexes and is involved in the assembly, stability, and modulation of CCND1-CDK4 complex activation. Acts either as an inhibitor or an activator of cyclin type D-CDK4 complexes depending on its phosphorylation state and/or stoichometry. This is Cyclin-dependent kinase inhibitor 1B from Homo sapiens (Human).